The chain runs to 318 residues: Porphobilinogen deaminase (318 aa).

C248 carries the post-translational modification S-(dipyrrolylmethanemethyl)cysteine.

Belongs to the HMBS family. Monomer. Dipyrromethane is required as a cofactor.

The catalysed reaction is 4 porphobilinogen + H2O = hydroxymethylbilane + 4 NH4(+). Its pathway is porphyrin-containing compound metabolism; protoporphyrin-IX biosynthesis; coproporphyrinogen-III from 5-aminolevulinate: step 2/4. Functionally, tetrapolymerization of the monopyrrole PBG into the hydroxymethylbilane pre-uroporphyrinogen in several discrete steps. The sequence is that of Porphobilinogen deaminase from Caulobacter sp. (strain K31).